A 76-amino-acid chain; its full sequence is Small nuclear ribonucleoprotein G (76 aa).

The Sm domain maps to 4 to 76; sequence AHPPELKKFM…IIMLEALERV (73 aa).

It belongs to the snRNP Sm proteins family. Core component of the spliceosomal U1, U2, U4 and U5 small nuclear ribonucleoproteins (snRNPs), the building blocks of the spliceosome. Most spliceosomal snRNPs contain a common set of Sm proteins, SNRPB, SNRPD1, SNRPD2, SNRPD3, SNRPE, SNRPF and SNRPG that assemble in a heptameric protein ring on the Sm site of the small nuclear RNA to form the core snRNP. Component of the U1 snRNP. The U1 snRNP is composed of the U1 snRNA and the 7 core Sm proteins SNRPB, SNRPD1, SNRPD2, SNRPD3, SNRPE, SNRPF and SNRPG, and at least three U1 snRNP-specific proteins SNRNP70/U1-70K, SNRPA/U1-A and SNRPC/U1-C. Component of the U4/U6-U5 tri-snRNP complex composed of the U4, U6 and U5 snRNAs and at least PRPF3, PRPF4, PRPF6, PRPF8, PRPF31, SNRNP200, TXNL4A, SNRNP40, SNRPB, SNRPD1, SNRPD2, SNRPD3, SNRPE, SNRPF, SNRPG, DDX23, CD2BP2, PPIH, SNU13, EFTUD2, SART1 and USP39, plus LSM2, LSM3, LSM4, LSM5, LSM6, LSM7 and LSM8. Component of the U7 snRNP complex, or U7 Sm protein core complex, that is composed of the U7 snRNA and at least LSM10, LSM11, SNRPB, SNRPD3, SNRPE, SNRPF and SNRPG; the complex does not contain SNRPD1 and SNRPD2. Component of the minor spliceosome, which splices U12-type introns. Part of the SMN-Sm complex that contains SMN1, GEMIN2/SIP1, DDX20/GEMIN3, GEMIN4, GEMIN5, GEMIN6, GEMIN7, GEMIN8, STRAP/UNRIP and the Sm proteins SNRPB, SNRPD1, SNRPD2, SNRPD3, SNRPE, SNRPF and SNRPG; catalyzes core snRNPs assembly. Forms a 6S pICln-Sm complex composed of CLNS1A/pICln, SNRPD1, SNRPD2, SNRPE, SNRPF and SNRPG; ring-like structure where CLNS1A/pICln mimics additional Sm proteins and which is unable to assemble into the core snRNP. Interacts with GEMIN2 (via N-terminus); the interaction is direct. Interacts with SNRPE; the interaction is direct.

The protein localises to the cytoplasm. It localises to the cytosol. Its subcellular location is the nucleus. In terms of biological role, plays a role in pre-mRNA splicing as a core component of the spliceosomal U1, U2, U4 and U5 small nuclear ribonucleoproteins (snRNPs), the building blocks of the spliceosome. Component of both the pre-catalytic spliceosome B complex and activated spliceosome C complexes. As a component of the minor spliceosome, involved in the splicing of U12-type introns in pre-mRNAs. As part of the U7 snRNP it is involved in histone 3'-end processing. The chain is Small nuclear ribonucleoprotein G (SNRPG) from Bos taurus (Bovine).